A 252-amino-acid chain; its full sequence is D-aminoacyl-tRNA deacylase (252 aa).

The protein belongs to the DtdA deacylase family. In terms of assembly, monomer. Requires Zn(2+) as cofactor.

The enzyme catalyses a D-aminoacyl-tRNA + H2O = a tRNA + a D-alpha-amino acid + H(+). The catalysed reaction is glycyl-tRNA(Ala) + H2O = tRNA(Ala) + glycine + H(+). In terms of biological role, D-aminoacyl-tRNA deacylase with broad substrate specificity. By recycling D-aminoacyl-tRNA to D-amino acids and free tRNA molecules, this enzyme counteracts the toxicity associated with the formation of D-aminoacyl-tRNA entities in vivo. The polypeptide is D-aminoacyl-tRNA deacylase (Pyrobaculum islandicum (strain DSM 4184 / JCM 9189 / GEO3)).